A 243-amino-acid polypeptide reads, in one-letter code: Adenosylcobinamide-GDP ribazoletransferase (243 aa).

Transmembrane regions (helical) follow at residues Phe33–Pro53, Ile59–Gly79, Ile105–Tyr125, Thr127–Ala147, Val172–Ile192, and Thr223–Ile243.

This sequence belongs to the CobS family. It depends on Mg(2+) as a cofactor.

It is found in the cell membrane. The catalysed reaction is alpha-ribazole + adenosylcob(III)inamide-GDP = adenosylcob(III)alamin + GMP + H(+). It carries out the reaction alpha-ribazole 5'-phosphate + adenosylcob(III)inamide-GDP = adenosylcob(III)alamin 5'-phosphate + GMP + H(+). The protein operates within cofactor biosynthesis; adenosylcobalamin biosynthesis; adenosylcobalamin from cob(II)yrinate a,c-diamide: step 7/7. In terms of biological role, joins adenosylcobinamide-GDP and alpha-ribazole to generate adenosylcobalamin (Ado-cobalamin). Also synthesizes adenosylcobalamin 5'-phosphate from adenosylcobinamide-GDP and alpha-ribazole 5'-phosphate. The sequence is that of Adenosylcobinamide-GDP ribazoletransferase from Alkaliphilus oremlandii (strain OhILAs) (Clostridium oremlandii (strain OhILAs)).